The primary structure comprises 337 residues: Tryptophan--tRNA ligase (337 aa).

Residues 11–13 and 19–20 contribute to the ATP site; these read QPT and GN. Residues 12–20 carry the 'HIGH' region motif; that stretch reads PTGALHLGN. Aspartate 135 contacts L-tryptophan. Residues 147 to 149, valine 191, and 200 to 204 contribute to the ATP site; these read GED and KMSKS. The short motif at 200–204 is the 'KMSKS' region element; it reads KMSKS.

It belongs to the class-I aminoacyl-tRNA synthetase family. Homodimer.

The protein resides in the cytoplasm. The enzyme catalyses tRNA(Trp) + L-tryptophan + ATP = L-tryptophyl-tRNA(Trp) + AMP + diphosphate + H(+). Catalyzes the attachment of tryptophan to tRNA(Trp). The sequence is that of Tryptophan--tRNA ligase from Parasynechococcus marenigrum (strain WH8102).